Here is a 130-residue protein sequence, read N- to C-terminus: P antigen family member 5 (130 aa).

Disordered regions lie at residues Met-1 to Glu-88 and Asp-101 to Leu-130. Residues Thr-14 to Thr-26 are compositionally biased toward basic and acidic residues. The segment covering Arg-27 to Pro-42 has biased composition (polar residues). Phosphothreonine occurs at positions 113 and 116.

It belongs to the GAGE family.

The polypeptide is P antigen family member 5 (PAGE5) (Homo sapiens (Human)).